The following is a 359-amino-acid chain: MPSPIPVERFLPRDLSPSIDLRPCSSPLELSHRKLPGGLPACSGRPRLLPPRLAWCSIDWEQVLLLEPLGSGGFGSVYRATYRGETVALKKVKRSTKNSLASRQSFWAELNAARLRHPHVVRVVAASASCPGDPGCPGTIIMEYTGTGTLHQRIYGRSPPLGAEICMRYARHVADGLRFLHRDGVVHLDLKPANVLLAPGDLCKIGDFGCSQRLREGDEAAGGEPCCTQLRHVGGTYTHRAPELLKGEPVTAKADIYSFAITLWQMVSRELPYTGDRQCVLYAVVAYDLRPEMGPLFSHTEEGRAARTIVQSCWAARPQERPNAEQLLERLEQECAMCTGGPPSCSPESNAPPPLGTGL.

Residues 63-336 (VLLLEPLGSG…LLERLEQECA (274 aa)) form the Protein kinase domain. ATP is bound by residues 69–77 (LGSGGFGSV) and K90. D189 (proton acceptor) is an active-site residue.

It belongs to the protein kinase superfamily. Ser/Thr protein kinase family.

Its subcellular location is the cytoplasm. The enzyme catalyses L-seryl-[protein] + ATP = O-phospho-L-seryl-[protein] + ADP + H(+). The catalysed reaction is L-threonyl-[protein] + ATP = O-phospho-L-threonyl-[protein] + ADP + H(+). Functionally, serine/threonine kinase involved in the regulation of MAPK signaling. The polypeptide is Serine/threonine-protein kinase mos (mos) (Xenopus laevis (African clawed frog)).